The sequence spans 284 residues: Four and a half LIM domains protein 5 (284 aa).

The segment at 8–32 (CQYCTSSLIGKKYVLKDDNLYCISC) adopts a C4-type zinc-finger fold. 3 consecutive LIM zinc-binding domains span residues 39–100 (NYCE…ECSS), 101–160 (KCFH…KEFA), and 161–220 (HYCN…LYAK).

In terms of assembly, interacts with CREM (via the third LIM domain). Interacts (via second LIM domain) with SPAG8. Testis-specific, temporal expression is coordinated with CREM.

The protein resides in the nucleus. Its function is as follows. May be involved in the regulation of spermatogenesis. Stimulates CREM transcriptional activity in a phosphorylation-independent manner. In Mus musculus (Mouse), this protein is Four and a half LIM domains protein 5 (Fhl5).